The chain runs to 278 residues: Large ribosomal subunit protein uL2 (278 aa).

The disordered stretch occupies residues 226–278 (NPIDHPHGGGEGRTSGGRHPVTPWGKPTKGKKTRSNKSTDKFILISRHKRKKK).

This sequence belongs to the universal ribosomal protein uL2 family. Part of the 50S ribosomal subunit. Forms a bridge to the 30S subunit in the 70S ribosome.

Functionally, one of the primary rRNA binding proteins. Required for association of the 30S and 50S subunits to form the 70S ribosome, for tRNA binding and peptide bond formation. It has been suggested to have peptidyltransferase activity; this is somewhat controversial. Makes several contacts with the 16S rRNA in the 70S ribosome. This is Large ribosomal subunit protein uL2 from Rhodopseudomonas palustris (strain HaA2).